The sequence spans 563 residues: Putative cytochrome c oxidase subunit 1-beta (563 aa).

7 helical membrane passes run 34-54 (IGHLYLITSFAFFLIGGVMAL), 76-96 (LFTLHGTIMLLLFATPTFAGF), 117-137 (MLSYWLFLFGGLIVLGSLAVP), 164-184 (MWIMGLALAGFGTILGSVNFL), 208-228 (LFTSILVLMAFPVLAAALLVL), 252-272 (LFWFFGHPEVYIIALPFFGII), and 284-304 (IFGYLTLIGATAAITGLSVVV). His-80 contacts Fe(II)-heme a. The Cu cation site is built by His-258 and Tyr-262. A cross-link (1'-histidyl-3'-tyrosine (His-Tyr)) is located at residues 258-262 (HPEVY). His-307 and His-308 together coordinate Cu cation. A run of 2 helical transmembrane segments spans residues 309–329 (MFATGAVLLPFFSFMSFLIAV) and 353–373 (MLWATGFLVSFLFGGLTGVIL). His-391 is a heme a3 binding site. The next 3 helical transmembrane spans lie at 392–412 (FHYVVFGTVVFATFGGFYFWW), 427–447 (IHFWTLFVGFHTTFLVQHWLG), and 470–490 (LSTIGAFLLGMSTLPFLYNVW). His-393 is a Fe(II)-heme a binding site. A disordered region spans residues 536–563 (AFDLHHPAHAGEAPQPEPKHEQADREPS). A compositionally biased stretch (basic and acidic residues) spans 552–563 (EPKHEQADREPS).

It belongs to the heme-copper respiratory oxidase family. Associates with subunits II, III and IV to form cytochrome c oxidase. Cu(2+) serves as cofactor. Requires heme as cofactor.

Its subcellular location is the cell membrane. It carries out the reaction 4 Fe(II)-[cytochrome c] + O2 + 8 H(+)(in) = 4 Fe(III)-[cytochrome c] + 2 H2O + 4 H(+)(out). The protein operates within energy metabolism; oxidative phosphorylation. Cytochrome c oxidase is the component of the respiratory chain that catalyzes the reduction of oxygen to water. Subunits 1-3 form the functional core of the enzyme complex. CO I is the catalytic subunit of the enzyme. Electrons originating in cytochrome c are transferred via the copper A center of subunit 2 and heme A of subunit 1 to the bimetallic center formed by heme A3 and copper B. The polypeptide is Putative cytochrome c oxidase subunit 1-beta (ctaD2) (Streptomyces avermitilis (strain ATCC 31267 / DSM 46492 / JCM 5070 / NBRC 14893 / NCIMB 12804 / NRRL 8165 / MA-4680)).